Here is a 117-residue protein sequence, read N- to C-terminus: Ribosome-binding factor A (117 aa).

It belongs to the RbfA family. Monomer. Binds 30S ribosomal subunits, but not 50S ribosomal subunits or 70S ribosomes.

It is found in the cytoplasm. Its function is as follows. One of several proteins that assist in the late maturation steps of the functional core of the 30S ribosomal subunit. Associates with free 30S ribosomal subunits (but not with 30S subunits that are part of 70S ribosomes or polysomes). Required for efficient processing of 16S rRNA. May interact with the 5'-terminal helix region of 16S rRNA. The polypeptide is Ribosome-binding factor A (Leuconostoc citreum (strain KM20)).